The following is a 208-amino-acid chain: Uridine kinase (208 aa).

11-18 contacts ATP; sequence GGSGSGKT.

The protein belongs to the uridine kinase family.

It localises to the cytoplasm. It catalyses the reaction uridine + ATP = UMP + ADP + H(+). The enzyme catalyses cytidine + ATP = CMP + ADP + H(+). The protein operates within pyrimidine metabolism; CTP biosynthesis via salvage pathway; CTP from cytidine: step 1/3. Its pathway is pyrimidine metabolism; UMP biosynthesis via salvage pathway; UMP from uridine: step 1/1. The chain is Uridine kinase from Staphylococcus carnosus (strain TM300).